Consider the following 309-residue polypeptide: Minor serine/threonine-protein phosphatase PP2A-1 catalytic subunit (309 aa).

Mn(2+) is bound by residues Asp57, His59, Asp85, and Asn117. The active-site Proton donor is the His118. Residues His167 and His241 each contribute to the Mn(2+) site. Leu309 carries the leucine methyl ester modification.

This sequence belongs to the PPP phosphatase family. PP-2A subfamily. The cofactor is Mn(2+).

It catalyses the reaction O-phospho-L-seryl-[protein] + H2O = L-seryl-[protein] + phosphate. The enzyme catalyses O-phospho-L-threonyl-[protein] + H2O = L-threonyl-[protein] + phosphate. Its function is as follows. Essential role in cell cycle control. PP2A may be involved in controlling the entry into mitosis, possibly acting as an inhibitor. This Schizosaccharomyces pombe (strain 972 / ATCC 24843) (Fission yeast) protein is Minor serine/threonine-protein phosphatase PP2A-1 catalytic subunit (ppa1).